A 101-amino-acid polypeptide reads, in one-letter code: Urease subunit beta (101 aa).

This sequence belongs to the urease beta subunit family. Heterotrimer of UreA (gamma), UreB (beta) and UreC (alpha) subunits. Three heterotrimers associate to form the active enzyme.

Its subcellular location is the cytoplasm. It carries out the reaction urea + 2 H2O + H(+) = hydrogencarbonate + 2 NH4(+). Its pathway is nitrogen metabolism; urea degradation; CO(2) and NH(3) from urea (urease route): step 1/1. The protein is Urease subunit beta of Actinobacillus pleuropneumoniae serotype 5b (strain L20).